Reading from the N-terminus, the 356-residue chain is Probable methyltransferase-like protein 15 homolog (356 aa).

S-adenosyl-L-methionine-binding positions include 55–57 (GGH), aspartate 74, phenylalanine 103, aspartate 126, and glutamine 133.

The protein belongs to the methyltransferase superfamily. RsmH family.

Its function is as follows. Probable S-adenosyl-L-methionine-dependent methyltransferase. This is Probable methyltransferase-like protein 15 homolog from Drosophila melanogaster (Fruit fly).